Reading from the N-terminus, the 58-residue chain is UPF0391 membrane protein ABO_0024 (58 aa).

The next 2 membrane-spanning stretches (helical) occupy residues 4 to 24 (WALTFLVVAIIAGVLGFGGIA) and 28 to 48 (ASIAKIIFFIFLALLVISLVV).

This sequence belongs to the UPF0391 family.

It localises to the cell membrane. This Alcanivorax borkumensis (strain ATCC 700651 / DSM 11573 / NCIMB 13689 / SK2) protein is UPF0391 membrane protein ABO_0024.